A 128-amino-acid chain; its full sequence is Translation initiation factor 5A (128 aa).

Lys35 carries the hypusine modification.

The protein belongs to the eIF-5A family.

Its subcellular location is the cytoplasm. In terms of biological role, functions by promoting the formation of the first peptide bond. The polypeptide is Translation initiation factor 5A (Methanosarcina barkeri (strain Fusaro / DSM 804)).